Reading from the N-terminus, the 121-residue chain is Large ribosomal subunit protein uL14 (121 aa).

Belongs to the universal ribosomal protein uL14 family. As to quaternary structure, part of the 50S ribosomal subunit. Forms a cluster with proteins L3 and L19. In the 70S ribosome, L14 and L19 interact and together make contacts with the 16S rRNA in bridges B5 and B8.

Its function is as follows. Binds to 23S rRNA. Forms part of two intersubunit bridges in the 70S ribosome. In Hydrogenobaculum sp. (strain Y04AAS1), this protein is Large ribosomal subunit protein uL14.